The chain runs to 211 residues: Glycerol-3-phosphate acyltransferase 2 (211 aa).

The next 5 membrane-spanning stretches (helical) occupy residues 6–26 (FASLFILAYLLGSFPAGVVVG), 57–77 (IIVFLIDFFKGTLATLIPVIF), 82–102 (HYLCLIFGLVAILGHAFPIFL), 124–144 (FFLICAVIFIPILFITSMVSL), and 148–168 (ISVVLIFIASFFFHDIALSII).

The protein belongs to the PlsY family. In terms of assembly, probably interacts with PlsX.

Its subcellular location is the cell membrane. It carries out the reaction an acyl phosphate + sn-glycerol 3-phosphate = a 1-acyl-sn-glycero-3-phosphate + phosphate. It participates in lipid metabolism; phospholipid metabolism. Catalyzes the transfer of an acyl group from acyl-phosphate (acyl-PO(4)) to glycerol-3-phosphate (G3P) to form lysophosphatidic acid (LPA). This enzyme utilizes acyl-phosphate as fatty acyl donor, but not acyl-CoA or acyl-ACP. In Lactobacillus acidophilus (strain ATCC 700396 / NCK56 / N2 / NCFM), this protein is Glycerol-3-phosphate acyltransferase 2.